A 1403-amino-acid polypeptide reads, in one-letter code: MLLNIVLISNLACLAFALPLKEGTRGSRCFLNGELVKTVNTSKVVSECCVKDDISIIKSNAEHYKSGDRLAAVIKYYRLYQVKDWHSCNPIYDDHGSFMILDIDNTGTLIPKMHTCRVECEIALNKDTGEVILNSYRINHYRISGTMHVSGWFKNKIEIPLENTCESIEVTCGLKTLNFHACFHTHKSCTRYFKGSILPELMIESFCTNLELILLVTFILVGSVMMMILTKTYIVYVFIPIFYPFVKLYAYMYNKYFKLCKNCLLAVHPFTNCPSTCICGMIYTTTESLKLHRMCNNCSGYKALPKTRKLCKSKISNIVLCVITSLIFFSFITPISSQCIDIEKLPDEYITCKRELANIKSLTIDDTYSFIYSCTCIIVLILLKKAAKYILYCNCSFCGMVHERRGLKIMDNFTNKCLSCVCAENKGLTIHRASEKCLFKFESSYNRTGLIIFMLLLVPTIVMTQETSINCKNIQSTQLTIEHLSKCMAFYQNKTSSPVVINEIISDASVDEQELIKSLNLNCNVIDRFISESSVIETQVYYEYIKSQLCPLQVHDIFTINSASNIQWKALARSFTLGVCNTNPHKHICRCLESMQMCTSTKTDHAREMSIYYDGHPDRFEHDMKIILNIMRYIVPGLGRVLLDQIKQTKDYQALRHIQGKLSPKSQSNLQLKGFLEFVDFILGANVTIEKTPQTLTTLSLIKGAHRNLDQKDPGPTPILVCKSPQKVVCYSPRGVTHPGDYISCKSKMYKWPSLGVYKHNRDQQQACSSDTHCLEMFEPAERTITTKICKVSDMTYSESPYSTGIPSCNVKRFGSCNVRGHQWQIAECSNGLFYYVSAKAHSKTNDITLYCLSANCLDLRYAFRSSSCSDIVWDTSYRNKLTPKSINHPDIENYIAALQSDIANDLTMHYFKPLKNLPAIIPQYKTMTLNGDKVSNGIRNSYIESHIPAINGLSAGINIAMPNGESLFSIIIYVRRVINKASYRFLYETGPTIGINAKHEEVCTGKCPSPIPHQDGWVTFSKERSSNWGCEEWGCLAINDGCLYGSCQDIIRPEYKIYKKSSIEQKDVEVCITMAHESFCSTVDVLQPLISDRIQLDIQTIQMDSMPNIIAVKNGKVYVGDINDLGSTAKKCGSVQLYSEGIIGSGTPKFDYVCHAFNRKDVILRRCFDNSYQSCLLLEQDNTLTIASTSHMEVHKKVSSVGTINYKIMLGDFDYNAYSTQATVTIDEIRCGGCYGCPEGMACALKLSTNTIGSCSIKSNCDTYIKIIAVDPMQSEYSIKLNCPLATETVSVSVCSASAYTKPSISKNQPKIVLNSLDETSYIEQHDKKCSTWLCRVYKEGISVIFQPLFGNLSFYWRLTIYIIISLIMLILFLYILIPLCKRLKGLLEYNERIYQMENKFK.

Positions 1–17 (MLLNIVLISNLACLAFA) are cleaved as a signal peptide. The Lumenal portion of the chain corresponds to 18 to 209 (LPLKEGTRGS…ELMIESFCTN (192 aa)). A glycan (N-linked (GlcNAc...) asparagine; by host) is linked at Asn-40. Residues 210-230 (LELILLVTFILVGSVMMMILT) form a helical membrane-spanning segment. Residues 231–314 (KTYIVYVFIP…PKTRKLCKSK (84 aa)) are Cytoplasmic-facing. The chain crosses the membrane as a helical span at residues 315 to 335 (ISNIVLCVITSLIFFSFITPI). Residues 336-361 (SSQCIDIEKLPDEYITCKRELANIKS) lie on the Lumenal side of the membrane. A helical membrane pass occupies residues 362 to 382 (LTIDDTYSFIYSCTCIIVLIL). At 383-448 (LKKAAKYILY…FKFESSYNRT (66 aa)) the chain is on the cytoplasmic side. The helical transmembrane segment at 449 to 469 (GLIIFMLLLVPTIVMTQETSI) threads the bilayer. Topologically, residues 470–1361 (NCKNIQSTQL…GNLSFYWRLT (892 aa)) are lumenal. A disulfide bridge links Cys-471 with Cys-487. Asn-493 is a glycosylation site (N-linked (GlcNAc...) asparagine; by host). Disulfide bonds link Cys-523/Cys-550, Cys-580/Cys-589, and Cys-591/Cys-598. Residues Asn-686 and Asn-1353 are each glycosylated (N-linked (GlcNAc...) asparagine; by host). Residues 1362 to 1382 (IYIIISLIMLILFLYILIPLC) traverse the membrane as a helical segment. The Cytoplasmic segment spans residues 1383-1403 (KRLKGLLEYNERIYQMENKFK).

It belongs to the nairovirus envelope glycoprotein family. As to quaternary structure, heterodimer with glycoprotein C; in prefusion state. Heterodimer with glycoprotein N; in prefusion state. Homotrimeric; in postfusion state. Specific enzymatic cleavage by host MBTPS1/S1P/SKI-1 endopeptidase yield glycoprotein N. Specific enzymatic cleavages by host furin-like protease and MBTPS1/S1P endopeptidase yield GP38. In terms of processing, glycosylated.

It localises to the host endoplasmic reticulum membrane. It is found in the virion membrane. The protein resides in the host Golgi apparatus membrane. Functionally, glycoprotein C and glycoprotein N interact with each other and are present at the surface of the virion. Glycoprotein N probably locks the Gn-Gc complex in a prefusion state. Glycoprotein N and glycoprotein C are able to attach the virion to host cell receptors. This attachment induces virion internalization predominantly through clathrin-dependent endocytosis. In terms of biological role, glycoprotein C and glycoprotein N interact with each other and are present at the surface of the virion. The spikes at the surface of the virion are formed by an N-terminal extension of glycoprotein C. Glycoprotein N and glycoprotein C are able to attach the virion to host cell receptors. This attachment induces virion internalization predominantly through clathrin-dependent endocytosis. Class II fusion protein that promotes fusion of viral membrane with host endosomal membrane after endocytosis of the virion. Exposure to potassium is necessary for the conformational change leading to fusion. The sequence is that of Envelopment polyprotein (GP) from Bos taurus (Bovine).